Reading from the N-terminus, the 161-residue chain is Glycine cleavage system H protein 2 (161 aa).

Residues 34–116 (TVTVGVTDIG…YGEGWIAKLK (83 aa)) enclose the Lipoyl-binding domain. Lys-75 is modified (N6-lipoyllysine).

The protein belongs to the GcvH family. The glycine cleavage system is composed of four proteins: P, T, L and H. Requires (R)-lipoate as cofactor.

Functionally, the glycine cleavage system catalyzes the degradation of glycine. The H protein shuttles the methylamine group of glycine from the P protein to the T protein. The chain is Glycine cleavage system H protein 2 from Aquifex aeolicus (strain VF5).